The following is a 335-amino-acid chain: Pyridoxal 5'-phosphate synthase subunit PdxS (335 aa).

Aspartate 30 serves as a coordination point for D-ribose 5-phosphate. The active-site Schiff-base intermediate with D-ribose 5-phosphate is the lysine 87. Glycine 159 is a binding site for D-ribose 5-phosphate. Residue arginine 171 participates in D-glyceraldehyde 3-phosphate binding. D-ribose 5-phosphate is bound by residues glycine 257 and 278–279 (GS).

It belongs to the PdxS/SNZ family. In the presence of PdxT, forms a dodecamer of heterodimers.

The enzyme catalyses aldehydo-D-ribose 5-phosphate + D-glyceraldehyde 3-phosphate + L-glutamine = pyridoxal 5'-phosphate + L-glutamate + phosphate + 3 H2O + H(+). The protein operates within cofactor biosynthesis; pyridoxal 5'-phosphate biosynthesis. Its function is as follows. Catalyzes the formation of pyridoxal 5'-phosphate from ribose 5-phosphate (RBP), glyceraldehyde 3-phosphate (G3P) and ammonia. The ammonia is provided by the PdxT subunit. Can also use ribulose 5-phosphate and dihydroxyacetone phosphate as substrates, resulting from enzyme-catalyzed isomerization of RBP and G3P, respectively. The sequence is that of Pyridoxal 5'-phosphate synthase subunit PdxS from Thermococcus gammatolerans (strain DSM 15229 / JCM 11827 / EJ3).